The chain runs to 740 residues: F-BAR and double SH3 domains protein 2 (740 aa).

Residues 8–282 (VKVTQELRNI…NSSKVVRDYN (275 aa)) enclose the F-BAR domain. Positions 303–323 (PCDSDTSRQLESETGTTEEHS) are disordered. Residues 307–323 (DTSRQLESETGTTEEHS) show a composition bias toward basic and acidic residues. Residues 356 to 397 (GVALSEQSRAELEQKIDEARESIRKAEIIKLKAEARLDLLKQ) are a coiled coil. SH3 domains lie at 469–530 (NYPL…FPTS) and 567–629 (ASVC…ELSA). Positions 567-629 (ASVCFVKALY…PSVLVEELSA (63 aa)) are required and sufficient for location at clathrin-coated pits. Positions 629–645 (ASENGDTPWTREIQISP) are enriched in polar residues. The segment at 629-740 (ASENGDTPWT…KMEDVEITLV (112 aa)) is disordered. Residues 646–657 (SPKPHTSLPPLP) show a composition bias toward pro residues. S675 and S681 each carry phosphoserine. Residues 675–706 (SQFFPRSPSANENSLHAESPGFSQASRQTPDT) are compositionally biased toward polar residues.

As to quaternary structure, homodimer. Interacts (via SH3 domain 2) with ITSN1 (via SH3 domain 4). Recruited to clathrin-coated pits during a mid-to-late stage of assembly via interaction with ITSN1. Interacts (via SH3 domain 1) with WASL. Interacts with WAS. Interacts with CASK and MAGI1. CASK inhibits interaction with MAGI1. Post-translationally, phosphorylated. Phosphorylation on a Ser residue is important for recruitment to the cell membrane and for its role in promoting endocytosis. In terms of tissue distribution, detected in inner ear vestibula and in stereocilia in cochlear hair cell bundles (at protein level). Ubiquitous. Detected in testis, liver, brain cortex, cerebellum, kidney, organ of Corti, utricle, spiral ganglion, tongue and eye.

The protein resides in the cytoplasm. It localises to the cell junction. Its subcellular location is the membrane. The protein localises to the clathrin-coated pit. It is found in the cell membrane. The protein resides in the cell projection. It localises to the stereocilium. Its function is as follows. Adapter protein that plays a role in endocytosis via clathrin-coated pits. Contributes to the internalization of cell surface receptors, such as integrin ITGB1 and transferrin receptor. Promotes endocytosis of EGFR in cancer cells, and thereby contributes to the down-regulation of EGFR signaling. Recruited to clathrin-coated pits during a mid-to-late stage of assembly, where it is required for normal progress from U-shaped intermediate stage pits to terminal, omega-shaped pits. Binds to membranes enriched in phosphatidylinositol 3,4-bisphosphate or phosphatidylinositol 3,4,5-trisphosphate. When bound to membranes, promotes actin polymerization via its interaction with WAS and/or WASL which leads to the activation of the Arp2/3 complex. Does not promote actin polymerisation in the absence of membranes. This chain is F-BAR and double SH3 domains protein 2 (Fchsd2), found in Mus musculus (Mouse).